Consider the following 549-residue polypeptide: Copalyl diphosphate synthase (549 aa).

The DXDDTA motif signature appears at 321 to 326 (DADDTA). The QXXDGSW motif signature appears at 451–457 (QRDDGSW).

It belongs to the terpene synthase family. Mg(2+) is required as a cofactor.

The enzyme catalyses (2E,6E,10E)-geranylgeranyl diphosphate = (+)-copalyl diphosphate. Functionally, involved in the biosynthesis of the labdane-type bicyclic diterpene labda-8(17),12(E),14-triene. Catalyzes the conversion of geranylgeranyl diphosphate (GGDP) into (+)-copalyl diphosphate. The sequence is that of Copalyl diphosphate synthase from Streptomyces anulatus (Streptomyces chrysomallus).